Reading from the N-terminus, the 348-residue chain is Fructose-1,6-bisphosphatase class 1 (348 aa).

Mg(2+) is bound by residues E92, D111, L113, and D114. Residues 114 to 117 and N204 contribute to the substrate site; that span reads DGSS. E276 contacts Mg(2+).

It belongs to the FBPase class 1 family. As to quaternary structure, homotetramer. Requires Mg(2+) as cofactor.

The protein resides in the cytoplasm. The catalysed reaction is beta-D-fructose 1,6-bisphosphate + H2O = beta-D-fructose 6-phosphate + phosphate. It functions in the pathway carbohydrate biosynthesis; gluconeogenesis. The chain is Fructose-1,6-bisphosphatase class 1 from Methylorubrum extorquens (strain PA1) (Methylobacterium extorquens).